The sequence spans 29 residues: Cytochrome b6-f complex subunit 8 (29 aa).

A helical transmembrane segment spans residues 3–23 (ILSISWAFLMVVFTFSLSLVV).

It belongs to the PetN family. As to quaternary structure, the 4 large subunits of the cytochrome b6-f complex are cytochrome b6, subunit IV (17 kDa polypeptide, PetD), cytochrome f and the Rieske protein, while the 4 small subunits are PetG, PetL, PetM and PetN. The complex functions as a dimer.

Its subcellular location is the plastid. It is found in the chloroplast thylakoid membrane. In terms of biological role, component of the cytochrome b6-f complex, which mediates electron transfer between photosystem II (PSII) and photosystem I (PSI), cyclic electron flow around PSI, and state transitions. In Chara vulgaris (Common stonewort), this protein is Cytochrome b6-f complex subunit 8.